A 395-amino-acid chain; its full sequence is Syncephapepsin (395 aa).

The N-terminal stretch at 1–19 (MKFSLALLATVALATISQA) is a signal peptide. A propeptide spans 20 to 71 (APVEKQVAGKPFQLVKNPHYQANATRAIFRAEKKYARHTAIPEQGKTIVKSA) (activation peptide). Positions 89-391 (YYATVSVGTP…NQGVPEVQIA (303 aa)) constitute a Peptidase A1 domain. Residue Asp-107 is part of the active site. The cysteines at positions 120 and 123 are disulfide-linked. Residue Asp-288 is part of the active site. Cys-322 and Cys-355 are disulfide-bonded.

This sequence belongs to the peptidase A1 family. Monomer.

Its function is as follows. Hydrolysis of proteins with a broad specificity. Residues recognized to be cleaved were primarily those of trypsin and chymotrypsin and Lys was the most susceptible. This is Syncephapepsin (SPSR) from Syncephalastrum racemosum (Filamentous fungus).